Consider the following 122-residue polypeptide: NADH-quinone oxidoreductase subunit A (122 aa).

The next 3 helical transmembrane spans lie at 10–30 (LIVF…LTIG), 67–87 (FALL…WAVV), and 91–111 (LGLF…IGLI).

Belongs to the complex I subunit 3 family. NDH-1 is composed of 14 different subunits. Subunits NuoA, H, J, K, L, M, N constitute the membrane sector of the complex.

The protein resides in the cell membrane. It carries out the reaction a quinone + NADH + 5 H(+)(in) = a quinol + NAD(+) + 4 H(+)(out). Functionally, NDH-1 shuttles electrons from NADH, via FMN and iron-sulfur (Fe-S) centers, to quinones in the respiratory chain. The immediate electron acceptor for the enzyme in this species is believed to be a menaquinone. Couples the redox reaction to proton translocation (for every two electrons transferred, four hydrogen ions are translocated across the cytoplasmic membrane), and thus conserves the redox energy in a proton gradient. The sequence is that of NADH-quinone oxidoreductase subunit A from Geobacillus thermodenitrificans (strain NG80-2).